Reading from the N-terminus, the 146-residue chain is D-aminoacyl-tRNA deacylase (146 aa).

A Gly-cisPro motif, important for rejection of L-amino acids motif is present at residues 137–138 (GP).

This sequence belongs to the DTD family. In terms of assembly, homodimer.

Its subcellular location is the cytoplasm. It catalyses the reaction glycyl-tRNA(Ala) + H2O = tRNA(Ala) + glycine + H(+). The enzyme catalyses a D-aminoacyl-tRNA + H2O = a tRNA + a D-alpha-amino acid + H(+). Its function is as follows. An aminoacyl-tRNA editing enzyme that deacylates mischarged D-aminoacyl-tRNAs. Also deacylates mischarged glycyl-tRNA(Ala), protecting cells against glycine mischarging by AlaRS. Acts via tRNA-based rather than protein-based catalysis; rejects L-amino acids rather than detecting D-amino acids in the active site. By recycling D-aminoacyl-tRNA to D-amino acids and free tRNA molecules, this enzyme counteracts the toxicity associated with the formation of D-aminoacyl-tRNA entities in vivo and helps enforce protein L-homochirality. The polypeptide is D-aminoacyl-tRNA deacylase (Deinococcus deserti (strain DSM 17065 / CIP 109153 / LMG 22923 / VCD115)).